A 356-amino-acid chain; its full sequence is Glutamine synthetase cytosolic isozyme 1-1 (356 aa).

An N-acetylserine modification is found at serine 2. 2 positions are modified to phosphoserine: serine 2 and serine 48. The 81-residue stretch at 19–99 folds into the GS beta-grasp domain; it reads IIAEYIWVGG…VMCDAYTPAG (81 aa). The disordered stretch occupies residues 36–62; sequence KARTLPGPVTDPSQLPKWNYDGSSTGQ. A GS catalytic domain is found at 106–356; the sequence is KRHAAAKVFS…IAETTILWNP (251 aa).

It belongs to the glutamine synthetase family. In terms of assembly, homooctamer. Interacts with CRK3 and GRF3. In terms of processing, phosphorylated by CRK3. As to expression, expressed in root tips, root hairs and epidermis. Ubiquitously expressed with higher levels in siliques and roots.

It localises to the cytoplasm. The enzyme catalyses L-glutamate + NH4(+) + ATP = L-glutamine + ADP + phosphate + H(+). Functionally, high-affinity glutamine synthetase which catalyzes the synthesis of glutamine from ammonium and glutamate. May contribute to the homeostatic control of glutamine synthesis in roots. The protein is Glutamine synthetase cytosolic isozyme 1-1 (GLN1-1) of Arabidopsis thaliana (Mouse-ear cress).